The chain runs to 388 residues: Succinate--CoA ligase [ADP-forming] subunit beta (388 aa).

An ATP-grasp domain is found at 9–244; sequence KSLFAEYGLP…PSQDDAREAH (236 aa). ATP contacts are provided by residues Lys-46, 53 to 55, Glu-99, Thr-102, and Glu-107; that span reads GRG. Mg(2+) contacts are provided by Asn-199 and Asp-213. Residues Asn-264 and 321-323 contribute to the substrate site; that span reads GIV.

Belongs to the succinate/malate CoA ligase beta subunit family. As to quaternary structure, heterotetramer of two alpha and two beta subunits. Mg(2+) serves as cofactor.

It carries out the reaction succinate + ATP + CoA = succinyl-CoA + ADP + phosphate. It catalyses the reaction GTP + succinate + CoA = succinyl-CoA + GDP + phosphate. The protein operates within carbohydrate metabolism; tricarboxylic acid cycle; succinate from succinyl-CoA (ligase route): step 1/1. Functionally, succinyl-CoA synthetase functions in the citric acid cycle (TCA), coupling the hydrolysis of succinyl-CoA to the synthesis of either ATP or GTP and thus represents the only step of substrate-level phosphorylation in the TCA. The beta subunit provides nucleotide specificity of the enzyme and binds the substrate succinate, while the binding sites for coenzyme A and phosphate are found in the alpha subunit. This Shewanella oneidensis (strain ATCC 700550 / JCM 31522 / CIP 106686 / LMG 19005 / NCIMB 14063 / MR-1) protein is Succinate--CoA ligase [ADP-forming] subunit beta.